Reading from the N-terminus, the 591-residue chain is Aspartate--tRNA(Asp/Asn) ligase (591 aa).

Residue glutamate 176 participates in L-aspartate binding. Residues 200-203 are aspartate; the sequence is QLFK. Arginine 222 is a binding site for L-aspartate. Residues 222–224 and glutamine 231 each bind ATP; that span reads RDE. Position 450 (histidine 450) interacts with L-aspartate. Glutamate 484 is a binding site for ATP. Arginine 491 is a binding site for L-aspartate. 536-539 contributes to the ATP binding site; sequence GLDR.

This sequence belongs to the class-II aminoacyl-tRNA synthetase family. Type 1 subfamily. In terms of assembly, homodimer.

The protein localises to the cytoplasm. The catalysed reaction is tRNA(Asx) + L-aspartate + ATP = L-aspartyl-tRNA(Asx) + AMP + diphosphate. Aspartyl-tRNA synthetase with relaxed tRNA specificity since it is able to aspartylate not only its cognate tRNA(Asp) but also tRNA(Asn). Reaction proceeds in two steps: L-aspartate is first activated by ATP to form Asp-AMP and then transferred to the acceptor end of tRNA(Asp/Asn). The protein is Aspartate--tRNA(Asp/Asn) ligase of Bacillus cereus (strain AH187).